The following is a 477-amino-acid chain: Bifunctional protein HldE (477 aa).

The ribokinase stretch occupies residues 1-318 (MKVTLPEFER…ENAVRGRAET (318 aa)). 195-198 (NLSE) contributes to the ATP binding site. Asp-264 is a catalytic residue. The cytidylyltransferase stretch occupies residues 344–477 (MTNGVFDILH…IKKIQKDSDK (134 aa)).

It in the N-terminal section; belongs to the carbohydrate kinase PfkB family. In the C-terminal section; belongs to the cytidylyltransferase family. As to quaternary structure, homodimer.

It catalyses the reaction D-glycero-beta-D-manno-heptose 7-phosphate + ATP = D-glycero-beta-D-manno-heptose 1,7-bisphosphate + ADP + H(+). The enzyme catalyses D-glycero-beta-D-manno-heptose 1-phosphate + ATP + H(+) = ADP-D-glycero-beta-D-manno-heptose + diphosphate. Its pathway is nucleotide-sugar biosynthesis; ADP-L-glycero-beta-D-manno-heptose biosynthesis; ADP-L-glycero-beta-D-manno-heptose from D-glycero-beta-D-manno-heptose 7-phosphate: step 1/4. It participates in nucleotide-sugar biosynthesis; ADP-L-glycero-beta-D-manno-heptose biosynthesis; ADP-L-glycero-beta-D-manno-heptose from D-glycero-beta-D-manno-heptose 7-phosphate: step 3/4. Catalyzes the phosphorylation of D-glycero-D-manno-heptose 7-phosphate at the C-1 position to selectively form D-glycero-beta-D-manno-heptose-1,7-bisphosphate. Functionally, catalyzes the ADP transfer from ATP to D-glycero-beta-D-manno-heptose 1-phosphate, yielding ADP-D-glycero-beta-D-manno-heptose. The polypeptide is Bifunctional protein HldE (Klebsiella pneumoniae subsp. pneumoniae (strain ATCC 700721 / MGH 78578)).